A 357-amino-acid polypeptide reads, in one-letter code: LINE-1 retrotransposable element ORF1 protein (357 aa).

A disordered region spans residues 1-40; that stretch reads MAKGKRKNPTNRNQDHSPSSERSTPTPPSPGHPNTTENLD. Residues 59 to 156 adopt a coiled-coil conformation; the sequence is HKSLKDLQES…IENIDTTVKE (98 aa). Residues 179–274 form an RNA recognition motif (RRM) domain region; the sequence is NLRIIGIDEN…KGRPIRITPD (96 aa). Positions 278–339 are C-terminal domain (CTD); the sequence is ETMKARRAWT…STNPALQRII (62 aa).

This sequence belongs to the transposase 22 family. As to quaternary structure, homotrimer (via coiled coil domain). May also form larger homooligomers. Interacts with Tex19.1 and UBR2. Interacts with MOV10. In terms of processing, polyubiquitinated, probably by UBR2, which induces its degradation. Expressed in meiotic spermatocytes and in the cerebellum (at protein level).

It localises to the nucleus. The protein localises to the nucleolus. It is found in the cytoplasm. The protein resides in the cytoplasmic ribonucleoprotein granule. Its subcellular location is the stress granule. Nucleic acid-binding protein which is essential for retrotransposition of LINE-1 elements in the genome. Functions as a nucleic acid chaperone binding its own transcript and therefore preferentially mobilizing the transcript from which they are encoded. The protein is LINE-1 retrotransposable element ORF1 protein of Mus musculus (Mouse).